Consider the following 282-residue polypeptide: Ribosome biogenesis GTPase A (282 aa).

The region spanning R14–P178 is the CP-type G domain. Residues N58–D61, N86–S87, N130–T135, and G174 contribute to the GTP site.

Belongs to the TRAFAC class YlqF/YawG GTPase family. MTG1 subfamily. As to quaternary structure, interacts with ctc. Interacts with the immature 50S ribosome subunit. 2 molecules of RbgA bind to one 50S subunit.

It localises to the cytoplasm. Its function is as follows. Essential protein that is required for a late step of 50S ribosomal subunit assembly. Has GTPase activity that is stimulated by interaction with the immature 50S ribosome subunit. Binds to the 23S rRNA. Required for the association of ribosomal proteins RplP and RpmA with the large subunit. The chain is Ribosome biogenesis GTPase A (rbgA) from Bacillus subtilis (strain 168).